Reading from the N-terminus, the 442-residue chain is ATP-dependent protease ATPase subunit HslU (442 aa).

Residues Ile-18, 60-65, Asp-255, Glu-320, and Arg-392 contribute to the ATP site; that span reads GVGKTE.

This sequence belongs to the ClpX chaperone family. HslU subfamily. A double ring-shaped homohexamer of HslV is capped on each side by a ring-shaped HslU homohexamer. The assembly of the HslU/HslV complex is dependent on binding of ATP.

The protein localises to the cytoplasm. In terms of biological role, ATPase subunit of a proteasome-like degradation complex; this subunit has chaperone activity. The binding of ATP and its subsequent hydrolysis by HslU are essential for unfolding of protein substrates subsequently hydrolyzed by HslV. HslU recognizes the N-terminal part of its protein substrates and unfolds these before they are guided to HslV for hydrolysis. This chain is ATP-dependent protease ATPase subunit HslU, found in Hahella chejuensis (strain KCTC 2396).